The sequence spans 308 residues: Maspardin (308 aa).

The region spanning 87–159 (FCDGFRKLLD…NSFWLMPAFM (73 aa)) is the AB hydrolase-1 domain. A Phosphoserine modification is found at Ser304.

It belongs to the AB hydrolase superfamily. In terms of assembly, interacts with CD4. Interacts with ALDH16A1. As to expression, expressed in cell lines FT.1 and in a L cell fibroblast derivative (at protein level).

The protein localises to the cytoplasm. Its function is as follows. May play a role as a negative regulatory factor in CD4-dependent T-cell activation. In Mus musculus (Mouse), this protein is Maspardin (Spg21).